The sequence spans 118 residues: Small ribosomal subunit protein uS13 (118 aa).

A disordered region spans residues 91-118 (HRRSLPVRGQRTKTNARTRKGPRKPIRK).

Belongs to the universal ribosomal protein uS13 family. As to quaternary structure, part of the 30S ribosomal subunit. Forms a loose heterodimer with protein S19. Forms two bridges to the 50S subunit in the 70S ribosome.

In terms of biological role, located at the top of the head of the 30S subunit, it contacts several helices of the 16S rRNA. In the 70S ribosome it contacts the 23S rRNA (bridge B1a) and protein L5 of the 50S subunit (bridge B1b), connecting the 2 subunits; these bridges are implicated in subunit movement. Contacts the tRNAs in the A and P-sites. This is Small ribosomal subunit protein uS13 from Marinomonas sp. (strain MWYL1).